Reading from the N-terminus, the 261-residue chain is X-box-binding protein 1 (261 aa).

Topologically, residues Met-1–Asn-185 are cytoplasmic. The interval Arg-44–Ala-93 is disordered. Residues Ser-47 and Ser-68 each carry the phosphoserine modification. A bZIP domain is found at Glu-70 to Leu-133. The interval Lys-72 to Arg-94 is basic motif. The nuclear localization signal (NLS); in isoforms 1 and isoform 2 stretch occupies residues Arg-75–Lys-92. The interval Leu-98–Leu-133 is leucine-zipper. The chain crosses the membrane as a helical; Signal-anchor for type II membrane protein span at residues Ile-186–Ser-203. Residues Cys-204 to Asn-261 are Lumenal-facing. The interval Gln-235–Asn-261 is necessary for the translational pausing of its own mRNA.

It belongs to the bZIP family. Isoform 2 interacts with SIRT1. Isoform 2 interacts with PIK3R1 and PIK3R2; the interactions are direct and induce translocation of XBP1 isoform 2 into the nucleus and the unfolded protein response (UPR) XBP1-dependent target genes activation in a ER stress- and/or insulin-dependent but PI3K-independent manner. Isoform 2 interacts with FOXO1; the interaction is direct and leads to FOXO1 ubiquitination and degradation via the proteasome pathway in hepatocytes. Isoform 1 interacts with HM13. Isoform 1 interacts with RNF139; the interaction induces ubiquitination and degradation of isoform 1. Isoform 1 interacts (via luminal domain) with DERL1; the interaction obviates the need for ectodomain shedding prior HM13/SPP-mediated XBP1 isoform 1 cleavage. Isoform 1 interacts with isoform 2; the interaction sequesters isoform 2 from the nucleus and enhances isoform 2 degradation in the cytoplasm. Isoform 1 interacts with HDAC3 and AKT1; the interactions occur in endothelial cell (EC) under disturbed flow. Isoform 1 interacts with the oncoprotein FOS. Isoform 2 interacts with ATF6; the interaction occurs in a ER stress-dependent manner and is required for DNA binding to the unfolded protein response element (UPRE). Isoform 2 interacts with PIK3R1; the interaction is direct and induces translocation of XBP1 isoform 2 into the nucleus and the unfolded protein response (UPR) XBP1-dependent target genes activation in a ER stress- and/or insulin-dependent but PI3K-independent manner. In terms of processing, acetylated by EP300; acetylation positively regulates the transcriptional activity of XBP1 isoform 2. Isoform 2 is deacetylated by SIRT1; deacetylation negatively regulates the transcriptional activity of XBP1 isoform 2. Ubiquitinated, leading to proteasome-mediated degradation in response to ER stress. Post-translationally, X-box-binding protein 1, cytoplasmic form and luminal form are produced by intramembrane proteolytic cleavage of ER membrane-anchored isoform 1 triggered by HM13/SPP in a DERL1-RNF139-dependent and VCP/p97-independent manner. X-box-binding protein 1, luminal form is ubiquitinated leading to proteasomal degradation. In terms of tissue distribution, expressed in plasma cells in rheumatoid synovium. Over-expressed in primary breast cancer and metastatic breast cancer cells. Isoform 1 and isoform 2 are expressed at higher level in proliferating as compared to confluent quiescent endothelial cells.

It localises to the endoplasmic reticulum. The protein localises to the nucleus. Its subcellular location is the cytoplasm. The protein resides in the endoplasmic reticulum membrane. It is found in the membrane. In terms of biological role, functions as a transcription factor during endoplasmic reticulum (ER) stress by regulating the unfolded protein response (UPR). Required for cardiac myogenesis and hepatogenesis during embryonic development, and the development of secretory tissues such as exocrine pancreas and salivary gland. Involved in terminal differentiation of B lymphocytes to plasma cells and production of immunoglobulins. Modulates the cellular response to ER stress in a PIK3R-dependent manner. Binds to the cis-acting X box present in the promoter regions of major histocompatibility complex class II genes. Involved in VEGF-induced endothelial cell (EC) proliferation and retinal blood vessel formation during embryonic development but also for angiogenesis in adult tissues under ischemic conditions. Also functions as a major regulator of the UPR in obesity-induced insulin resistance and type 2 diabetes for the management of obesity and diabetes prevention. Functionally, plays a role in the unconventional cytoplasmic splicing processing of its own mRNA triggered by the endoplasmic reticulum (ER) transmembrane endoribonuclease ERN1: upon ER stress, the emerging XBP1 polypeptide chain, as part of a mRNA-ribosome-nascent chain (R-RNC) complex, cotranslationally recruits its own unprocessed mRNA through transient docking to the ER membrane and translational pausing, therefore facilitating efficient IRE1-mediated XBP1 mRNA isoform 2 production. In endothelial cells (EC), associated with KDR, promotes IRE1-mediated XBP1 mRNA isoform 2 productions in a vascular endothelial growth factor (VEGF)-dependent manner, leading to EC proliferation and angiogenesis. Functions as a negative feed-back regulator of the potent transcription factor XBP1 isoform 2 protein levels through proteasome-mediated degradation, thus preventing the constitutive activation of the ER stress response signaling pathway. Inhibits the transactivation activity of XBP1 isoform 2 in myeloma cells. Acts as a weak transcriptional factor. Together with HDAC3, contributes to the activation of NFE2L2-mediated HMOX1 transcription factor gene expression in a PI(3)K/mTORC2/Akt-dependent signaling pathway leading to EC survival under disturbed flow/oxidative stress. Binds to the ER stress response element (ERSE) upon ER stress. Binds to the consensus 5'-GATGACGTG[TG]N(3)[AT]T-3' sequence related to cAMP responsive element (CRE)-like sequences. Binds the Tax-responsive element (TRE) present in the long terminal repeat (LTR) of T-cell leukemia virus type 1 (HTLV-I) and to the TPA response elements (TRE). Associates preferentially to the HDAC3 gene promoter region in a static flow-dependent manner. Binds to the CDH5/VE-cadherin gene promoter region. Functions as a stress-inducible potent transcriptional activator during endoplasmic reticulum (ER) stress by inducing unfolded protein response (UPR) target genes via binding to the UPR element (UPRE). Up-regulates target genes encoding ER chaperones and ER-associated degradation (ERAD) components to enhance the capacity of productive folding and degradation mechanism, respectively, in order to maintain the homeostasis of the ER under ER stress. Plays a role in the production of immunoglobulins and interleukin-6 in the presence of stimuli required for plasma cell differentiation. Induces phospholipid biosynthesis and ER expansion. Contributes to the VEGF-induced endothelial cell (EC) growth and proliferation in a Akt/GSK-dependent and/or -independent signaling pathway, respectively, leading to beta-catenin nuclear translocation and E2F2 gene expression. Promotes umbilical vein EC apoptosis and atherosclerotisis development in a caspase-dependent signaling pathway, and contributes to VEGF-induced EC proliferation and angiogenesis in adult tissues under ischemic conditions. Involved in the regulation of endostatin-induced autophagy in EC through BECN1 transcriptional activation. Plays a role as an oncogene by promoting tumor progression: stimulates zinc finger protein SNAI1 transcription to induce epithelial-to-mesenchymal (EMT) transition, cell migration and invasion of breast cancer cells. Involved in adipocyte differentiation by regulating lipogenic gene expression during lactation. Plays a role in the survival of both dopaminergic neurons of the substantia nigra pars compacta (SNpc), by maintaining protein homeostasis and of myeloma cells. Increases insulin sensitivity in the liver as a response to a high carbohydrate diet, resulting in improved glucose tolerance. Also improves glucose homeostasis in an ER stress- and/or insulin-independent manner through both binding and proteasome-induced degradation of the transcription factor FOXO1, hence resulting in suppression of gluconeogenic genes expression and in a reduction of blood glucose levels. Controls the induction of de novo fatty acid synthesis in hepatocytes by regulating the expression of a subset of lipogenic genes in an ER stress- and UPR-independent manner. Associates preferentially to the HDAC3 gene promoter region in a disturbed flow-dependent manner. Binds to the BECN1 gene promoter region. Binds to the CDH5/VE-cadherin gene promoter region. Binds to the ER stress response element (ERSE) upon ER stress. Binds to the 5'-CCACG-3' motif in the PPARG promoter. In Homo sapiens (Human), this protein is X-box-binding protein 1.